The chain runs to 1158 residues: cGMP-specific 3',5'-cyclic phosphodiesterase (1158 aa).

Disordered regions lie at residues Met1 to Asp137 and Ser195 to Glu216. The span at Ala30–Asn71 shows a compositional bias: low complexity. Positions Gly108–Gln135 are enriched in polar residues. The segment covering Ser202–Pro215 has biased composition (low complexity). 2 consecutive GAF domains span residues Asp242 to Ile394 and Asn426 to Ile640. Residues Ser670–Val993 form the PDEase domain. His746 (proton donor) is an active-site residue. 4 residues coordinate a divalent metal cation: His750, His786, Asp787, and Asp897. Disordered stretches follow at residues Gln1034–Leu1065 and Val1097–Leu1158. Residues Gly1041–Arg1052 show a composition bias toward basic and acidic residues. A compositionally biased stretch (low complexity) spans Ala1114–Ala1130. Over residues Ser1148–Leu1158 the composition is skewed to basic residues. Cys1155 bears the Cysteine methyl ester mark. Residue Cys1155 is the site of S-farnesyl cysteine attachment. Residues Ala1156–Leu1158 constitute a propeptide, removed in mature form.

It belongs to the cyclic nucleotide phosphodiesterase family. Interacts with PrBP. The cofactor is a divalent metal cation.

Its subcellular location is the cell membrane. The enzyme catalyses 3',5'-cyclic GMP + H2O = GMP + H(+). Functionally, has a role regulating cGMP transport in Malpighian tubule principal cells. This chain is cGMP-specific 3',5'-cyclic phosphodiesterase, found in Drosophila ananassae (Fruit fly).